Consider the following 460-residue polypeptide: Zinc transporter 6 (460 aa).

Residues 1–33 (MGTIHLFRKSQRSLVGKLTHEFRLVAADRRSWK) are Cytoplasmic-facing. Residues 34–54 (ILLFGAINLICIGFLLMWCSS) traverse the membrane as a helical segment. The Extracellular portion of the chain corresponds to 55–64 (TNSIALTAYT). A helical transmembrane segment spans residues 65–85 (YLTIFDLFSLITCLISYWVMV). Residues 86–98 (KKPSPVYSFGFER) lie on the Cytoplasmic side of the membrane. A helical transmembrane segment spans residues 99–119 (FEVLAVFASTVLAQLGALFIL). The Extracellular portion of the chain corresponds to 120-134 (KESAERFLEQPEIHT). Residues 135–155 (GRLLVGTFVALFFNLFTMLSV) traverse the membrane as a helical segment. The Cytoplasmic segment spans residues 156 to 200 (RNKPFAYVSEAASTSWLQEHVADLSRSICGIIPGLSSIFLPRMNP). Residues 201-221 (FVLIDIAGALALCITYMLIEI) traverse the membrane as a helical segment. The Extracellular portion of the chain corresponds to 222–228 (NNYYAVD). The helical transmembrane segment at 229–249 (TASAIAIALMTFGTMYPMSVY) threads the bilayer. At 250–460 (SGKVLLQTTP…GTNTRGQSRP (211 aa)) the chain is on the cytoplasmic side. A disordered region spans residues 372–392 (PVTSTPAKPSSPPPEFSFNTP).

The protein belongs to the cation diffusion facilitator (CDF) transporter (TC 2.A.4) family. SLC30A subfamily. As to quaternary structure, heterodimer with SLC30A5; form a functional zinc ion transmembrane transporter.

The protein localises to the golgi apparatus. Its subcellular location is the trans-Golgi network membrane. Has probably no intrinsic transporter activity but together with SLC30A5 forms a functional zinc ion:proton antiporter heterodimer, mediating zinc entry into the lumen of organelles along the secretory pathway. As part of that zinc ion:proton antiporter, contributes to zinc ion homeostasis within the early secretory pathway and regulates the activation and folding of enzymes like alkaline phosphatases and enzymes involved in phosphatidylinositol glycan anchor biosynthesis. The polypeptide is Zinc transporter 6 (SLC30A6) (Gallus gallus (Chicken)).